A 318-amino-acid polypeptide reads, in one-letter code: Small ribosomal subunit protein uS3 (318 aa).

One can recognise a KH type-2 domain in the interval 17–86; it reads MDEYFAEQLS…NPQIDAQEVK (70 aa). The span at 198-229 shows a compositional bias: basic and acidic residues; the sequence is SVEVEEPAEKPAEKPAEKPAEKAAAPKKEAAK. The disordered stretch occupies residues 198-275; that stretch reads SVEVEEPAEK…VQAETSEEIE (78 aa). Over residues 234 to 250 the composition is skewed to pro residues; the sequence is APAPEAPAPAPEAPAPA. The segment covering 253-275 has biased composition (acidic residues); the sequence is EEAEVAEPEEAEEVQAETSEEIE.

Belongs to the universal ribosomal protein uS3 family. Part of the 30S ribosomal subunit.

Functionally, binds the lower part of the 30S subunit head. In Methanosarcina acetivorans (strain ATCC 35395 / DSM 2834 / JCM 12185 / C2A), this protein is Small ribosomal subunit protein uS3.